We begin with the raw amino-acid sequence, 88 residues long: Small ribosomal subunit protein uS15 (88 aa).

It belongs to the universal ribosomal protein uS15 family. As to quaternary structure, part of the 30S ribosomal subunit. Forms a bridge to the 50S subunit in the 70S ribosome, contacting the 23S rRNA.

Functionally, one of the primary rRNA binding proteins, it binds directly to 16S rRNA where it helps nucleate assembly of the platform of the 30S subunit by binding and bridging several RNA helices of the 16S rRNA. Its function is as follows. Forms an intersubunit bridge (bridge B4) with the 23S rRNA of the 50S subunit in the ribosome. This chain is Small ribosomal subunit protein uS15, found in Methylacidiphilum infernorum (isolate V4) (Methylokorus infernorum (strain V4)).